The sequence spans 458 residues: MSAGKIVQVIGAVVDVEFPRDQVPQIYDALVVDERGLTLEVQQQLGDGVVRTIAMGSSDGLTRSEKVSNTGNPISVPVGQGTLGRIMDVLGEPVDEAGEVKTDERWSIHRNAPSYEEQSGGQELLETGIKVIDLLCPFAKGGKVGLFGGAGVGKTVNMMELIRNIAVEHSGYSVFAGVGERTREGNDFYHEMKDSNVLDKVSLVYGQMNEPPGNRLRVALTGLTMAEYFRDEGRDVLMFIDNIYRYTLAGQEVSALLGRMPSAVGYQPTLAEEMGKLQERITSTKTGSITSVQAVYVPADDLTDPAPATTFAHLDATIVLSRQIAELGIYPAVDPLDSTSRQLDPLVIGQEHYDVARGVQGVLQRYKELKDIIAILGMDELSEEDKLTVSRARKIQRFLSQPFFVAEVFTGMPGKYVSLKDTVASFKAIIDGEYDHLPEQAFYMVGTVEEAAEKAKNL.

Position 148 to 155 (148 to 155 (GGAGVGKT)) interacts with ATP.

Belongs to the ATPase alpha/beta chains family. As to quaternary structure, F-type ATPases have 2 components, CF(1) - the catalytic core - and CF(0) - the membrane proton channel. CF(1) has five subunits: alpha(3), beta(3), gamma(1), delta(1), epsilon(1). CF(0) has three main subunits: a(1), b(2) and c(9-12). The alpha and beta chains form an alternating ring which encloses part of the gamma chain. CF(1) is attached to CF(0) by a central stalk formed by the gamma and epsilon chains, while a peripheral stalk is formed by the delta and b chains.

It localises to the cell inner membrane. The catalysed reaction is ATP + H2O + 4 H(+)(in) = ADP + phosphate + 5 H(+)(out). Its function is as follows. Produces ATP from ADP in the presence of a proton gradient across the membrane. The catalytic sites are hosted primarily by the beta subunits. This Halorhodospira halophila (strain DSM 244 / SL1) (Ectothiorhodospira halophila (strain DSM 244 / SL1)) protein is ATP synthase subunit beta.